A 276-amino-acid chain; its full sequence is 4-deoxy-L-threo-5-hexosulose-uronate ketol-isomerase (276 aa).

Zn(2+) is bound by residues His194, His196, Glu201, and His243.

It belongs to the KduI family. Requires Zn(2+) as cofactor.

The catalysed reaction is 5-dehydro-4-deoxy-D-glucuronate = 3-deoxy-D-glycero-2,5-hexodiulosonate. Its pathway is glycan metabolism; pectin degradation; 2-dehydro-3-deoxy-D-gluconate from pectin: step 4/5. Catalyzes the isomerization of 5-dehydro-4-deoxy-D-glucuronate to 3-deoxy-D-glycero-2,5-hexodiulosonate. In Lachnoclostridium phytofermentans (strain ATCC 700394 / DSM 18823 / ISDg) (Clostridium phytofermentans), this protein is 4-deoxy-L-threo-5-hexosulose-uronate ketol-isomerase.